The primary structure comprises 229 residues: Large ribosomal subunit protein uL1 (229 aa).

Belongs to the universal ribosomal protein uL1 family. In terms of assembly, part of the 50S ribosomal subunit.

Functionally, binds directly to 23S rRNA. The L1 stalk is quite mobile in the ribosome, and is involved in E site tRNA release. In terms of biological role, protein L1 is also a translational repressor protein, it controls the translation of the L11 operon by binding to its mRNA. This chain is Large ribosomal subunit protein uL1, found in Clostridium botulinum (strain Alaska E43 / Type E3).